Here is a 132-residue protein sequence, read N- to C-terminus: Small ribosomal subunit protein uS8 (132 aa).

Belongs to the universal ribosomal protein uS8 family. Part of the 30S ribosomal subunit. Contacts proteins S5 and S12.

Functionally, one of the primary rRNA binding proteins, it binds directly to 16S rRNA central domain where it helps coordinate assembly of the platform of the 30S subunit. The protein is Small ribosomal subunit protein uS8 of Cereibacter sphaeroides (strain ATCC 17025 / ATH 2.4.3) (Rhodobacter sphaeroides).